The chain runs to 144 residues: Interleukin-9 (144 aa).

A signal peptide spans 1-18 (MLVTYILASVLLFSSVLG). Gln19 is modified (pyrrolidone carboxylic acid). Asn50, Asn78, Asn101, and Asn114 each carry an N-linked (GlcNAc...) asparagine glycan.

The protein belongs to the IL-7/IL-9 family. In terms of assembly, interacts with IL9R. Interacts with IL2RG.

The protein localises to the secreted. Multifunctional cytokine secreted mainly by T-helper 2 lymphocytes and also mast cells or NKT cells that plays important roles in the immune response against parasites. Affects intestinal epithelial permeability and adaptive immunity. In addition, induces the differentiation of specific T-cell subsets such as IL-17 producing helper T-cells (TH17) and also proliferation and differentiation of mast cells. Mechanistically, exerts its biological effects through a receptor composed of IL9R subunit and a signal transducing subunit IL2RG. Receptor stimulation results in the rapid activation of JAK1 and JAK3 kinase activities leading to STAT1, STAT3 and STAT5-mediated transcriptional programs. Induction of differentiation genes seems to be mediated by STAT1 alone, while protection of cells from apoptosis depends on STAT3 and STAT5. This Mus musculus (Mouse) protein is Interleukin-9 (Il9).